A 1010-amino-acid chain; its full sequence is Retinoblastoma-related protein 1 (1010 aa).

Positions 1 to 23 are disordered; the sequence is MEGAAPPASSGSEVTGAGSGKVD. The tract at residues 419–619 is domain A; the sequence is TPVSTAMTTA…EKGSSMYNSL (201 aa). Residues 419–861 form a pocket region; that stretch reads TPVSTAMTTA…NEVFIPTVKP (443 aa). The tract at residues 620 to 730 is spacer; sequence IVARPTLSAE…PAAGGELCAE (111 aa). Residues 657-679 are disordered; that stretch reads LPPLPFQKQEHSPDKDEVRSPKR. Over residues 664-679 the composition is skewed to basic and acidic residues; it reads KQEHSPDKDEVRSPKR. A domain B region spans residues 731–861; it reads TGIGVFLSKI…NEVFIPTVKP (131 aa). A disordered region spans residues 868 to 898; the sequence is SGTSPNKKNEEKCAADGPYPESPRLSRFPNL.

Belongs to the retinoblastoma protein (RB) family.

It is found in the nucleus. Regulator of biological processes that recruits a histone deacetylase to control gene transcription. May play a role in the entry into mitosis, negatively regulating the cell proliferation. Formation of stable complexes with geminiviridae replication-associated proteins may create a cellular environment which favors viral DNA replication. In Oryza sativa subsp. indica (Rice), this protein is Retinoblastoma-related protein 1 (RBR1).